Here is a 623-residue protein sequence, read N- to C-terminus: UvrABC system protein C (623 aa).

The region spanning 28 to 105 (GAPGVYRMLD…IKQLKPKYNV (78 aa)) is the GIY-YIG domain. The region spanning 215-250 (TRVQEELAEQMMAASEAMEFERAAALRDRIRALTTV) is the UVR domain.

It belongs to the UvrC family. Interacts with UvrB in an incision complex.

It is found in the cytoplasm. The UvrABC repair system catalyzes the recognition and processing of DNA lesions. UvrC both incises the 5' and 3' sides of the lesion. The N-terminal half is responsible for the 3' incision and the C-terminal half is responsible for the 5' incision. In Ruegeria pomeroyi (strain ATCC 700808 / DSM 15171 / DSS-3) (Silicibacter pomeroyi), this protein is UvrABC system protein C.